Reading from the N-terminus, the 115-residue chain is Non-specific lipid-transfer protein Cw18 (115 aa).

The first 25 residues, 1–25 (MARTAATKLALVALVAAMLLVAADA), serve as a signal peptide directing secretion. 4 disulfides stabilise this stretch: cysteine 29–cysteine 77, cysteine 39–cysteine 54, cysteine 55–cysteine 97, and cysteine 75–cysteine 111.

Belongs to the plant LTP family. In terms of tissue distribution, highly expressed in leaves and coleoptiles. No expression in roots.

Plant non-specific lipid-transfer proteins transfer phospholipids as well as galactolipids across membranes. May play a role in wax or cutin deposition in the cell walls of expanding epidermal cells and certain secretory tissues. This is Non-specific lipid-transfer protein Cw18 (CW18) from Hordeum vulgare (Barley).